Here is a 500-residue protein sequence, read N- to C-terminus: Trehalose-6-phosphate synthase (500 aa).

Position 28 (R28) interacts with D-glucose 6-phosphate. G48 to G49 provides a ligand contact to UDP-alpha-D-glucose. 2 residues coordinate D-glucose 6-phosphate: Y108 and D162. Positions 304 and 309 each coordinate UDP-alpha-D-glucose. R342 contacts D-glucose 6-phosphate. A UDP-alpha-D-glucose-binding site is contributed by L407–E411.

It belongs to the glycosyltransferase 20 family. In terms of assembly, homotetramer.

It carries out the reaction ADP-alpha-D-glucose + D-glucose 6-phosphate = alpha,alpha-trehalose 6-phosphate + ADP + H(+). The catalysed reaction is CDP-alpha-D-glucose + D-glucose 6-phosphate = alpha,alpha-trehalose 6-phosphate + CDP + H(+). The enzyme catalyses GDP-alpha-D-glucose + D-glucose 6-phosphate = alpha,alpha-trehalose 6-phosphate + GDP + H(+). It catalyses the reaction TDP-alpha-D-glucose + D-glucose 6-phosphate = 5-methyl-UDP + alpha,alpha-trehalose 6-phosphate + H(+). It carries out the reaction D-glucose 6-phosphate + UDP-alpha-D-glucose = alpha,alpha-trehalose 6-phosphate + UDP + H(+). It participates in glycan biosynthesis; trehalose biosynthesis. Its function is as follows. Probably involved in the osmoprotection via the biosynthesis of trehalose and in the production of glycogen and alpha-glucan via the TreS-Pep2 branch involved in the biosynthesis of maltose-1-phosphate (M1P). Catalyzes the transfer of glucose from UDP-glucose (UDP-Glc) to D-glucose 6-phosphate (Glc-6-P) to form trehalose-6-phosphate. Probably also able to use ADP-Glc, CDP-Glc, GDP-Glc and TDP-Glc as glucosyl donors. The polypeptide is Trehalose-6-phosphate synthase (Mycobacterium bovis (strain ATCC BAA-935 / AF2122/97)).